The following is a 74-amino-acid chain: Brevinin-2CG1 (74 aa).

The first 22 residues, 1-22 (MFTMKKSMLVLFFLGTISLSLC), serve as a signal peptide directing secretion. Positions 23–39 (EEERNADEDDGEMTEEV) are cleaved as a propeptide — removed in mature form. A disulfide bridge connects residues Cys68 and Cys74.

In terms of tissue distribution, expressed by the skin glands.

It localises to the secreted. Functionally, antimicrobial peptide active against a variety of Gram-positive and some Gram-negative bacterial strains. Has antifungal activity against a slime mold isolate. Has hemolytic activity against human erythrocytes. The chain is Brevinin-2CG1 from Amolops chunganensis (Chungan torrent frog).